Consider the following 177-residue polypeptide: Large ribosomal subunit protein bL9 (177 aa).

The tract at residues E151–A177 is disordered. Over residues E157–E167 the composition is skewed to low complexity. Residues A168–A177 show a composition bias toward basic and acidic residues.

It belongs to the bacterial ribosomal protein bL9 family.

Functionally, binds to the 23S rRNA. This Solidesulfovibrio magneticus (strain ATCC 700980 / DSM 13731 / RS-1) (Desulfovibrio magneticus) protein is Large ribosomal subunit protein bL9.